The chain runs to 191 residues: dTTP/UTP pyrophosphatase (191 aa).

Catalysis depends on D64, which acts as the Proton acceptor.

The protein belongs to the Maf family. YhdE subfamily. The cofactor is a divalent metal cation.

It localises to the cytoplasm. It carries out the reaction dTTP + H2O = dTMP + diphosphate + H(+). The catalysed reaction is UTP + H2O = UMP + diphosphate + H(+). Nucleoside triphosphate pyrophosphatase that hydrolyzes dTTP and UTP. May have a dual role in cell division arrest and in preventing the incorporation of modified nucleotides into cellular nucleic acids. The polypeptide is dTTP/UTP pyrophosphatase (Thermosipho africanus (strain TCF52B)).